Reading from the N-terminus, the 155-residue chain is Protein archease-like (155 aa).

Residues Asp-26, Asp-154, and Ile-155 each contribute to the Ca(2+) site.

The protein belongs to the archease family.

Its function is as follows. Component of the tRNA-splicing ligase complex required to facilitate the enzymatic turnover of catalytic subunit RtcB (F16A11.2). The chain is Protein archease-like from Caenorhabditis elegans.